Here is a 271-residue protein sequence, read N- to C-terminus: Chymotrypsin-like elastase family member 2A (271 aa).

An N-terminal signal peptide occupies residues 1–16 (MIRTLLLSALVAGALS). A propeptide spans 17-30 (CGYPTYEVQHDVSR) (activation peptide). The 239-residue stretch at 31-269 (VVGGQEASPN…YIDWINSVIA (239 aa)) folds into the Peptidase S1 domain. A disulfide bridge connects residues C60 and C76. Residues H75 and D123 each act as charge relay system in the active site. Disulfide bonds link C157–C224, C188–C204, and C214–C245. The active-site Charge relay system is the S218.

Belongs to the peptidase S1 family. Elastase subfamily. As to quaternary structure, interacts with CPA1. Interacts with SERPINA1. In terms of tissue distribution, pancreas.

The protein resides in the secreted. The catalysed reaction is Preferential cleavage: Leu-|-Xaa, Met-|-Xaa and Phe-|-Xaa. Hydrolyzes elastin.. Its function is as follows. Elastase that enhances insulin signaling and might have a physiologic role in cellular glucose metabolism. Circulates in plasma and reduces platelet hyperactivation, triggers both insulin secretion and degradation, and increases insulin sensitivity. This chain is Chymotrypsin-like elastase family member 2A (Cela2a), found in Rattus norvegicus (Rat).